A 122-amino-acid polypeptide reads, in one-letter code: Large ribosomal subunit protein bL12 (122 aa).

Belongs to the bacterial ribosomal protein bL12 family. Homodimer. Part of the ribosomal stalk of the 50S ribosomal subunit. Forms a multimeric L10(L12)X complex, where L10 forms an elongated spine to which 2 to 4 L12 dimers bind in a sequential fashion. Binds GTP-bound translation factors.

In terms of biological role, forms part of the ribosomal stalk which helps the ribosome interact with GTP-bound translation factors. Is thus essential for accurate translation. In Mesoplasma florum (strain ATCC 33453 / NBRC 100688 / NCTC 11704 / L1) (Acholeplasma florum), this protein is Large ribosomal subunit protein bL12.